Here is a 227-residue protein sequence, read N- to C-terminus: E3 ubiquitin-protein ligase ZNRF1 (227 aa).

Positions 1–38 (MGGKQSTAARSRGPFPGVSTDDSAVPPPGGAPHFGHYR) are disordered. A lipid anchor (N-myristoyl glycine) is attached at Gly2. The interval 2–10 (GGKQSTAAR) is required for endosomal and lysosomal localization and myristoylation. Phosphoserine occurs at positions 50, 52, and 53. A disordered region spans residues 77-105 (RGAGDAERAPGSGGSASDSTYAHGNGYQE). A Phosphotyrosine modification is found at Tyr103. Ser123 is subject to Phosphoserine. The RING-type; atypical zinc-finger motif lies at 184 to 225 (CVICLEELLQGDTIARLPCLCIYHKSCIDSWFEVNRSCPEHP).

In terms of assembly, interacts with AKT1, GLUL and TUBB2A. Interacts with ZNRF2. Interacts (via its RING domain) with UBE2N. Interacts (when phosphorylated) with YWHAE. N-myristoylation targets ZNRF1 to intracellular membranes. In terms of processing, phosphorylated by SRC at Tyr-103; leading to 'Lys-63'-linked ubiquitination of TLR3, lysosomal trafficking and degradation.

It localises to the endosome. The protein localises to the lysosome. Its subcellular location is the membrane. It is found in the cytoplasmic vesicle. The protein resides in the secretory vesicle. It localises to the synaptic vesicle membrane. It carries out the reaction S-ubiquitinyl-[E2 ubiquitin-conjugating enzyme]-L-cysteine + [acceptor protein]-L-lysine = [E2 ubiquitin-conjugating enzyme]-L-cysteine + N(6)-ubiquitinyl-[acceptor protein]-L-lysine.. Its pathway is protein modification; protein ubiquitination. Its function is as follows. E3 ubiquitin-protein ligase that plays a role in different processes including cell differentiation, receptor recycling or regulation of inflammation. Mediates the ubiquitination of AKT1 and GLUL, thereby playing a role in neuron cells differentiation. Plays a role in the establishment and maintenance of neuronal transmission and plasticity. Regulates Schwann cells differentiation by mediating ubiquitination of GLUL. Promotes neurodegeneration by mediating 'Lys-48'-linked polyubiquitination and subsequent degradation of AKT1 in axons: degradation of AKT1 prevents AKT1-mediated phosphorylation of GSK3B, leading to GSK3B activation and phosphorylation of DPYSL2/CRMP2 followed by destabilization of microtubule assembly in axons. Ubiquitinates the Na(+)/K(+) ATPase alpha-1 subunit/ATP1A1 and thereby influences its endocytosis and/or degradation. Controls ligand-induced EGFR signaling via mediating receptor ubiquitination and recruitment of the ESCRT machinery. Acts as a negative feedback mechanism controlling TLR3 trafficking by mediating TLR3 'Lys-63'-linked polyubiquitination to reduce type I IFN production. Modulates inflammation by promoting caveolin-1/CAV1 ubiquitination and degradation to regulate TLR4-activated immune response. This is E3 ubiquitin-protein ligase ZNRF1 (ZNRF1) from Bos taurus (Bovine).